We begin with the raw amino-acid sequence, 114 residues long: Small ribosomal subunit protein uS13m (114 aa).

The interval 92 to 114 (DGLPLRGQRSHTNARTSRKRIRK) is disordered.

This sequence belongs to the universal ribosomal protein uS13 family. In terms of assembly, part of the small ribosomal subunit.

Its subcellular location is the mitochondrion. Functionally, located at the top of the head of the small subunit, it contacts several helices of the 18S rRNA. In Oenothera berteroana (Bertero's evening primrose), this protein is Small ribosomal subunit protein uS13m (RPS13).